Reading from the N-terminus, the 296-residue chain is GTPase Era (296 aa).

The region spanning 7–174 is the Era-type G domain; it reads RTGFVAIVGR…LEEIAQRLPE (168 aa). The G1 stretch occupies residues 15 to 22; sequence GRPNVGKS. 15 to 22 contributes to the GTP binding site; it reads GRPNVGKS. Residues 41–45 form a G2 region; the sequence is QTTRH. Positions 62 to 65 are G3; the sequence is DTPG. GTP is bound by residues 62-66 and 123-126; these read DTPGF and SKID. Positions 123 to 126 are G4; that stretch reads SKID. Residues 153-155 form a G5 region; the sequence is VSA. A KH type-2 domain is found at 197–281; sequence VREKIFRLVG…HLEVYIKVRK (85 aa).

This sequence belongs to the TRAFAC class TrmE-Era-EngA-EngB-Septin-like GTPase superfamily. Era GTPase family. Monomer.

Its subcellular location is the cytoplasm. It localises to the cell inner membrane. Its function is as follows. An essential GTPase that binds both GDP and GTP, with rapid nucleotide exchange. Plays a role in 16S rRNA processing and 30S ribosomal subunit biogenesis and possibly also in cell cycle regulation and energy metabolism. This chain is GTPase Era, found in Bordetella avium (strain 197N).